The chain runs to 108 residues: MSRVSEYGVPEGVRESDSDTDSVFMYQHTELMQNNASPLVVQTRPPAVLIPLVDVPRPRSRRKASAQLKMQMDRLCNVLGVVLQMATLALVTYIAFVVHTRATSCKRE.

Residues 1-20 (MSRVSEYGVPEGVRESDSDT) form a disordered region. Residues 1–77 (MSRVSEYGVP…LKMQMDRLCN (77 aa)) are Intravirion-facing. Residues 78–98 (VLGVVLQMATLALVTYIAFVV) form a helical; Signal-anchor for type II membrane protein membrane-spanning segment. Residues 99–108 (HTRATSCKRE) lie on the Virion surface side of the membrane.

This sequence belongs to the varicellovirus ORF1 protein family. In terms of assembly, homodimer. In terms of processing, phosphorylated.

It localises to the virion membrane. The protein localises to the host Golgi apparatus membrane. The sequence is that of Structural protein 1 from Varicella-zoster virus (strain Dumas) (HHV-3).